Consider the following 318-residue polypeptide: Adenylate isopentenyltransferase 4 (318 aa).

Residue 12 to 19 (GATGSGKS) participates in ATP binding.

It belongs to the IPP transferase family. The cofactor is Mg(2+). As to expression, expressed in immature seeds with highest expression in the chalazal endosperm.

The protein localises to the cytoplasm. It carries out the reaction dimethylallyl diphosphate + ADP = N(6)-(dimethylallyl)adenosine 5'-diphosphate + diphosphate. The enzyme catalyses dimethylallyl diphosphate + ATP = N(6)-(dimethylallyl)adenosine 5'-triphosphate + diphosphate. In terms of biological role, involved in cytokinin biosynthesis. Catalyzes the transfer of an isopentenyl group from dimethylallyl diphosphate (DMAPP) to ATP and ADP, but not to AMP. Has no DMAPP:tRNA isopentenyltransferase activity. The protein is Adenylate isopentenyltransferase 4 (IPT4) of Arabidopsis thaliana (Mouse-ear cress).